A 344-amino-acid chain; its full sequence is Histone-lysine N-methyltransferase, H3 lysine-9 specific KMT1 (344 aa).

One can recognise a Pre-SET domain in the interval 79–174 (SGCSCAKDSE…DCPNRVVERG (96 aa)). Residues cysteine 81, cysteine 83, cysteine 89, cysteine 94, cysteine 96, cysteine 156, cysteine 160, cysteine 162, cysteine 166, and cysteine 272 each coordinate Zn(2+). The region spanning 177-312 (IPLEIFRTPD…EGEELTFDYV (136 aa)) is the SET domain. Residue tyrosine 311 coordinates S-adenosyl-L-methionine. A Post-SET domain is found at 328-344 (HMTRCLCGSKKCRKFLW). Residues cysteine 332, cysteine 334, and cysteine 339 each contribute to the Zn(2+) site.

The protein belongs to the class V-like SAM-binding methyltransferase superfamily.

The protein localises to the chromosome. The catalysed reaction is L-lysyl(9)-[histone H3] + 3 S-adenosyl-L-methionine = N(6),N(6),N(6)-trimethyl-L-lysyl(9)-[histone H3] + 3 S-adenosyl-L-homocysteine + 3 H(+). Its function is as follows. Histone methyltransferase that specifically trimethylates histone H3 to form H3K9me3. H3K9me3 marks chromatin regions for DNA methylation. Plays a key role in the regulation of the biosynthesis of the gamma-pyrones fusapyrone (FPY) and deoxyfusapyrone (dFPY). The chain is Histone-lysine N-methyltransferase, H3 lysine-9 specific KMT1 from Fusarium mangiferae (Mango malformation disease fungus).